The chain runs to 329 residues: Apolipoprotein E (329 aa).

The N-terminal stretch at 1–18 (MKVLWAALVVALLAGCWA) is a signal peptide. Repeat copies occupy residues 92-113 (TLME…EQLG), 114-135 (PMAS…ARLR), 136-157 (SDME…AMLG), 158-179 (QSTE…KRVL), 180-201 (RDAE…EGAE), 202-223 (RSVS…TRHA), 224-245 (KVDA…QQLR), and 246-267 (GRLE…EQME). Residues 92-267 (TLMEETMKEI…HLDEVREQME (176 aa)) form an 8 X 22 AA approximate tandem repeats region. A Methionine sulfoxide modification is found at M155. S159 is modified (phosphoserine). Residues 170–180 (HMRKLRKRVLR) are LDL and other lipoprotein receptors binding. 174–177 (LRKR) provides a ligand contact to heparin. Residues 222–302 (HAKVDALATQ…GWFEPLVEDM (81 aa)) form a lipid-binding and lipoprotein association region. 241–248 (GQQLRGRL) is a binding site for heparin. A homooligomerization region spans residues 278-329 (NQMRQQAEPFQARLKGWFEPLVEDMQRQWAVLVEKVQAAVGTSPTTPPVETK). Residues 290-302 (RLKGWFEPLVEDM) form a specificity for association with VLDL region.

This sequence belongs to the apolipoprotein A1/A4/E family. Homotetramer. May interact with ABCA1; functionally associated with ABCA1 in the biogenesis of HDLs. May interact with APP/A4 amyloid-beta peptide; the interaction is extremely stable in vitro but its physiological significance is unclear. May interact with MAPT. May interact with MAP2. In the cerebrospinal fluid, interacts with secreted SORL1. Interacts with PMEL; this allows the loading of PMEL luminal fragment on ILVs to induce fibril nucleation. In terms of processing, APOE exists as multiple glycosylated and sialylated glycoforms within cells and in plasma. The extent of glycosylation and sialylation are tissue and context specific. Glycated in plasma VLDL. Post-translationally, phosphorylated by FAM20C in the extracellular medium.

The protein localises to the secreted. The protein resides in the extracellular space. It localises to the extracellular matrix. Its subcellular location is the extracellular vesicle. It is found in the endosome. The protein localises to the multivesicular body. APOE is an apolipoprotein, a protein associating with lipid particles, that mainly functions in lipoprotein-mediated lipid transport between organs via the plasma and interstitial fluids. APOE is a core component of plasma lipoproteins and is involved in their production, conversion and clearance. Apolipoproteins are amphipathic molecules that interact both with lipids of the lipoprotein particle core and the aqueous environment of the plasma. As such, APOE associates with chylomicrons, chylomicron remnants, very low density lipoproteins (VLDL) and intermediate density lipoproteins (IDL) but shows a preferential binding to high-density lipoproteins (HDL). It also binds a wide range of cellular receptors including the LDL receptor/LDLR, the LDL receptor-related proteins LRP1, LRP2 and LRP8 and the very low-density lipoprotein receptor/VLDLR that mediate the cellular uptake of the APOE-containing lipoprotein particles. Finally, APOE also has a heparin-binding activity and binds heparan-sulfate proteoglycans on the surface of cells, a property that supports the capture and the receptor-mediated uptake of APOE-containing lipoproteins by cells. A main function of APOE is to mediate lipoprotein clearance through the uptake of chylomicrons, VLDLs, and HDLs by hepatocytes. APOE is also involved in the biosynthesis by the liver of VLDLs as well as their uptake by peripheral tissues ensuring the delivery of triglycerides and energy storage in muscle, heart and adipose tissues. By participating in the lipoprotein-mediated distribution of lipids among tissues, APOE plays a critical role in plasma and tissues lipid homeostasis. APOE is also involved in two steps of reverse cholesterol transport, the HDLs-mediated transport of cholesterol from peripheral tissues to the liver, and thereby plays an important role in cholesterol homeostasis. First, it is functionally associated with ABCA1 in the biogenesis of HDLs in tissues. Second, it is enriched in circulating HDLs and mediates their uptake by hepatocytes. APOE also plays an important role in lipid transport in the central nervous system, regulating neuron survival and sprouting. This chain is Apolipoprotein E (APOE), found in Arctocephalus gazella (Antarctic fur seal).